The primary structure comprises 264 residues: Phosphatidylserine decarboxylase proenzyme (264 aa).

Active-site charge relay system; for autoendoproteolytic cleavage activity residues include Asp-86, His-142, and Ser-226. Ser-226 acts as the Schiff-base intermediate with substrate; via pyruvic acid; for decarboxylase activity in catalysis. Ser-226 carries the pyruvic acid (Ser); by autocatalysis modification.

This sequence belongs to the phosphatidylserine decarboxylase family. PSD-B subfamily. Prokaryotic type I sub-subfamily. As to quaternary structure, heterodimer of a large membrane-associated beta subunit and a small pyruvoyl-containing alpha subunit. It depends on pyruvate as a cofactor. In terms of processing, is synthesized initially as an inactive proenzyme. Formation of the active enzyme involves a self-maturation process in which the active site pyruvoyl group is generated from an internal serine residue via an autocatalytic post-translational modification. Two non-identical subunits are generated from the proenzyme in this reaction, and the pyruvate is formed at the N-terminus of the alpha chain, which is derived from the carboxyl end of the proenzyme. The autoendoproteolytic cleavage occurs by a canonical serine protease mechanism, in which the side chain hydroxyl group of the serine supplies its oxygen atom to form the C-terminus of the beta chain, while the remainder of the serine residue undergoes an oxidative deamination to produce ammonia and the pyruvoyl prosthetic group on the alpha chain. During this reaction, the Ser that is part of the protease active site of the proenzyme becomes the pyruvoyl prosthetic group, which constitutes an essential element of the active site of the mature decarboxylase.

It localises to the cell membrane. It carries out the reaction a 1,2-diacyl-sn-glycero-3-phospho-L-serine + H(+) = a 1,2-diacyl-sn-glycero-3-phosphoethanolamine + CO2. It functions in the pathway phospholipid metabolism; phosphatidylethanolamine biosynthesis; phosphatidylethanolamine from CDP-diacylglycerol: step 2/2. Its function is as follows. Catalyzes the formation of phosphatidylethanolamine (PtdEtn) from phosphatidylserine (PtdSer). This is Phosphatidylserine decarboxylase proenzyme from Geobacillus kaustophilus (strain HTA426).